Reading from the N-terminus, the 72-residue chain is ATP synthase subunit c (72 aa).

2 consecutive transmembrane segments (helical) span residues 1-21 (MSLG…GAGI) and 48-68 (MFIG…FSFI).

It belongs to the ATPase C chain family. In terms of assembly, F-type ATPases have 2 components, F(1) - the catalytic core - and F(0) - the membrane proton channel. F(1) has five subunits: alpha(3), beta(3), gamma(1), delta(1), epsilon(1). F(0) has three main subunits: a(1), b(2) and c(10-14). The alpha and beta chains form an alternating ring which encloses part of the gamma chain. F(1) is attached to F(0) by a central stalk formed by the gamma and epsilon chains, while a peripheral stalk is formed by the delta and b chains.

Its subcellular location is the cell membrane. Its function is as follows. F(1)F(0) ATP synthase produces ATP from ADP in the presence of a proton or sodium gradient. F-type ATPases consist of two structural domains, F(1) containing the extramembraneous catalytic core and F(0) containing the membrane proton channel, linked together by a central stalk and a peripheral stalk. During catalysis, ATP synthesis in the catalytic domain of F(1) is coupled via a rotary mechanism of the central stalk subunits to proton translocation. In terms of biological role, key component of the F(0) channel; it plays a direct role in translocation across the membrane. A homomeric c-ring of between 10-14 subunits forms the central stalk rotor element with the F(1) delta and epsilon subunits. This chain is ATP synthase subunit c, found in Geobacillus stearothermophilus (Bacillus stearothermophilus).